A 357-amino-acid polypeptide reads, in one-letter code: Elongation factor Ts (357 aa).

An involved in Mg(2+) ion dislocation from EF-Tu region spans residues 82-85 (TDFV).

The protein belongs to the EF-Ts family.

The protein resides in the cytoplasm. Associates with the EF-Tu.GDP complex and induces the exchange of GDP to GTP. It remains bound to the aminoacyl-tRNA.EF-Tu.GTP complex up to the GTP hydrolysis stage on the ribosome. The polypeptide is Elongation factor Ts (Campylobacter jejuni subsp. jejuni serotype O:6 (strain 81116 / NCTC 11828)).